The sequence spans 289 residues: Eukaryotic translation initiation factor 3 subunit G (289 aa).

Residues 1-33 (MSRPTKADWADDEEFDDPSALPPQQITTNKDGT) form a disordered region. Residues 209–287 (ATLRVTNVSE…LILRVEFAKR (79 aa)) form the RRM domain.

It belongs to the eIF-3 subunit G family. Component of the eukaryotic translation initiation factor 3 (eIF-3) complex.

The protein localises to the cytoplasm. In terms of biological role, RNA-binding component of the eukaryotic translation initiation factor 3 (eIF-3) complex, which is involved in protein synthesis of a specialized repertoire of mRNAs and, together with other initiation factors, stimulates binding of mRNA and methionyl-tRNAi to the 40S ribosome. The eIF-3 complex specifically targets and initiates translation of a subset of mRNAs involved in cell proliferation. This subunit can bind 18S rRNA. The sequence is that of Eukaryotic translation initiation factor 3 subunit G (tif35) from Emericella nidulans (strain FGSC A4 / ATCC 38163 / CBS 112.46 / NRRL 194 / M139) (Aspergillus nidulans).